The following is a 299-amino-acid chain: Cancer/testis antigen family 47 member B1 (299 aa).

Basic and acidic residues predominate over residues 1-10; that stretch reads MSATGDRHPT. 2 disordered regions span residues 1 to 102 and 215 to 299; these read MSAT…EGNE and AREP…SKGT. 2 stretches are compositionally biased toward low complexity: residues 20–31 and 46–60; these read QEGAQAEAAGAG and VPAA…PVEG. Residues 81-101 are compositionally biased toward acidic residues; the sequence is AEEDSDIGPATEEEEEEEEGN. Basic and acidic residues predominate over residues 215–238; it reads AREPAEEAADEKPPEEAAEEKLTE. Acidic residues-rich tracts occupy residues 239–251 and 268–281; these read EATE…EPTS and WDEE…EEEK. Residues 270–298 are a coiled coil; it reads EEAQDAAGEEEKEQEKEKDVENKVKNSKG. The span at 282–293 shows a compositional bias: basic and acidic residues; it reads EQEKEKDVENKV.

The protein belongs to the CT47 family.

This chain is Cancer/testis antigen family 47 member B1, found in Homo sapiens (Human).